The chain runs to 320 residues: ATP-dependent 6-phosphofructokinase (320 aa).

Glycine 12 provides a ligand contact to ATP. 22–26 (RGVVR) is a binding site for ADP. ATP is bound by residues 73–74 (RF) and 103–106 (GDGS). Aspartate 104 contacts Mg(2+). 126-128 (TID) serves as a coordination point for substrate. Aspartate 128 serves as the catalytic Proton acceptor. Arginine 155 lines the ADP pocket. Substrate-binding positions include arginine 163 and 170 to 172 (MGR). ADP is bound by residues 186–188 (GCE), lysine 212, and 214–216 (KKH). Residues glutamate 223, arginine 244, and 250–253 (HIQR) each bind substrate.

It belongs to the phosphofructokinase type A (PFKA) family. ATP-dependent PFK group I subfamily. Prokaryotic clade 'B1' sub-subfamily. As to quaternary structure, homotetramer. The cofactor is Mg(2+).

The protein resides in the cytoplasm. It carries out the reaction beta-D-fructose 6-phosphate + ATP = beta-D-fructose 1,6-bisphosphate + ADP + H(+). It participates in carbohydrate degradation; glycolysis; D-glyceraldehyde 3-phosphate and glycerone phosphate from D-glucose: step 3/4. Its activity is regulated as follows. Allosterically activated by ADP and other diphosphonucleosides, and allosterically inhibited by phosphoenolpyruvate. Functionally, catalyzes the phosphorylation of D-fructose 6-phosphate to fructose 1,6-bisphosphate by ATP, the first committing step of glycolysis. In Vibrio parahaemolyticus serotype O3:K6 (strain RIMD 2210633), this protein is ATP-dependent 6-phosphofructokinase.